We begin with the raw amino-acid sequence, 497 residues long: Ganglioside-induced differentiation-associated protein 2 (497 aa).

The 181-residue stretch at 43 to 223 folds into the Macro domain; the sequence is RSPFLYNKDV…TYQKLLPLYF (181 aa). The interval 252–273 is disordered; the sequence is ERQIRISEKPGAPEDNQEEEDE. Residues 253–263 show a composition bias toward basic and acidic residues; it reads RQIRISEKPGA. Ser280 carries the phosphoserine modification. Positions 333-481 constitute a CRAL-TRIO domain; sequence DIASLKALYQ…FPPFVLEYDA (149 aa).

The protein belongs to the GDAP2 family.

This Homo sapiens (Human) protein is Ganglioside-induced differentiation-associated protein 2 (GDAP2).